The chain runs to 120 residues: Cell division protein FtsL (120 aa).

Residues 1-36 (MSNLAVKYKQQAQEEVQIQTPPQQMVQPKAKAKITR) lie on the Cytoplasmic side of the membrane. Residues 37–57 (IEKLLYVAFIGFLLYACVAFI) form a helical membrane-spanning segment. Residues 58–120 (GNKAGLYQVN…INANNVKGLK (63 aa)) are Extracellular-facing.

It belongs to the FtsL family.

The protein localises to the cell membrane. Its function is as follows. Essential cell division protein. The chain is Cell division protein FtsL from Bacillus anthracis.